Here is a 393-residue protein sequence, read N- to C-terminus: Phosphoglycerate kinase (393 aa).

Substrate-binding positions include 22-24 (DFN), arginine 37, 60-63 (HLGR), arginine 119, and arginine 152. Residues lysine 202, glycine 293, glutamate 324, and 350–353 (GGDS) each bind ATP.

It belongs to the phosphoglycerate kinase family. In terms of assembly, monomer.

Its subcellular location is the cytoplasm. It carries out the reaction (2R)-3-phosphoglycerate + ATP = (2R)-3-phospho-glyceroyl phosphate + ADP. The protein operates within carbohydrate degradation; glycolysis; pyruvate from D-glyceraldehyde 3-phosphate: step 2/5. The sequence is that of Phosphoglycerate kinase from Borreliella burgdorferi (strain ZS7) (Borrelia burgdorferi).